The following is a 303-amino-acid chain: Movement protein (303 aa).

Polar residues predominate over residues 1 to 18 (MSNIVSPFSGSSRTTSDV). Disordered regions lie at residues 1–24 (MSNI…QAGG) and 267–303 (EESE…LRIK).

This sequence belongs to the bromovirus movement protein family. In terms of processing, phosphorylated by host.

The protein resides in the host cell junction. The protein localises to the host plasmodesma. Functionally, transports viral genome to neighboring plant cells directly through plasmosdesmata, without any budding. The movement protein allows efficient cell to cell propagation, by bypassing the host cell wall barrier. Acts by forming a tubular structure at the host plasmodesmata, enlarging it enough to allow free passage of virion capsids. This is Movement protein from Brome mosaic virus (BMV).